Consider the following 852-residue polypeptide: Patatin-like phospholipase domain-containing protein CaO19.1504 (852 aa).

The span at 41-52 shows a compositional bias: low complexity; that stretch reads ATTDITTTPIND. The disordered stretch occupies residues 41 to 184; sequence ATTDITTTPI…KKTTPTSSTS (144 aa). Over residues 75 to 95 the composition is skewed to polar residues; sequence INGTVSDSSSITDEDIMNSSY. A compositionally biased stretch (low complexity) spans 101 to 110; that stretch reads SSTNLKSNST. Positions 113–122 are enriched in acidic residues; the sequence is DDDDDDDDDD. Composition is skewed to low complexity over residues 129–142 and 158–171; these read SGTT…SLSS and GGSR…KGSS. Residues 207 to 227 form a helical membrane-spanning segment; it reads WPILIFVFSWIGILGIFYFMI. The PNPLA domain occupies 396–588; the sequence is LCLSGGACFA…RTDIPIEALN (193 aa). The short motif at 427–431 is the GXSXG element; the sequence is GTSGG. Ser-429 serves as the catalytic Nucleophile. Asp-575 functions as the Proton acceptor in the catalytic mechanism. The tract at residues 800–840 is disordered; sequence KKLLDELDNEDEEEDEEEEEVDVDDDDDDDDDSLSDSFEIT. Acidic residues predominate over residues 805–833; sequence ELDNEDEEEDEEEEEVDVDDDDDDDDDSL.

This sequence belongs to the PLPL family.

It is found in the membrane. Its function is as follows. Probable lipid hydrolase. The polypeptide is Patatin-like phospholipase domain-containing protein CaO19.1504 (Candida albicans (strain SC5314 / ATCC MYA-2876) (Yeast)).